Here is a 155-residue protein sequence, read N- to C-terminus: SsrA-binding protein (155 aa).

It belongs to the SmpB family.

Its subcellular location is the cytoplasm. In terms of biological role, required for rescue of stalled ribosomes mediated by trans-translation. Binds to transfer-messenger RNA (tmRNA), required for stable association of tmRNA with ribosomes. tmRNA and SmpB together mimic tRNA shape, replacing the anticodon stem-loop with SmpB. tmRNA is encoded by the ssrA gene; the 2 termini fold to resemble tRNA(Ala) and it encodes a 'tag peptide', a short internal open reading frame. During trans-translation Ala-aminoacylated tmRNA acts like a tRNA, entering the A-site of stalled ribosomes, displacing the stalled mRNA. The ribosome then switches to translate the ORF on the tmRNA; the nascent peptide is terminated with the 'tag peptide' encoded by the tmRNA and targeted for degradation. The ribosome is freed to recommence translation, which seems to be the essential function of trans-translation. In Lactococcus lactis subsp. cremoris (strain MG1363), this protein is SsrA-binding protein.